A 355-amino-acid chain; its full sequence is U5 small nuclear ribonucleoprotein 40 kDa protein (355 aa).

WD repeat units lie at residues 60–99 (GHKG…INYS), 103–142 (GHKG…LIKR), 145–185 (EHSG…STHL), 187–226 (QHKY…DPLY), 230–269 (SHQD…PPNR), 280–319 (NFEK…LQYC), and 322–355 (GHSG…EIKP).

In terms of assembly, component of the pre-catalytic and catalytic spliceosome complexes. Component of the postcatalytic spliceosome P complex. Part of the U5 snRNP complex. Component of the U4/U6-U5 tri-snRNP complex.

It is found in the nucleus. Its function is as follows. Required for pre-mRNA splicing as component of the activated spliceosome. Component of the U5 small nuclear ribonucleoprotein (snRNP) complex and the U4/U6-U5 tri-snRNP complex, building blocks of the spliceosome. The polypeptide is U5 small nuclear ribonucleoprotein 40 kDa protein (snrnp40) (Dictyostelium discoideum (Social amoeba)).